The primary structure comprises 130 residues: Organic solute transporter subunit beta (130 aa).

Over M1–P35 the chain is Extracellular. A helical transmembrane segment spans residues W36–G56. Residues R57–S130 lie on the Cytoplasmic side of the membrane. The segment at L99–S130 is disordered. Residues M110–D124 show a composition bias toward basic and acidic residues.

Belongs to the OST-beta family. Interacts with SLC51A. The Ost-alpha/Ost-beta complex is a heterodimer composed of alpha (SLC51A) and beta (SLC51B) subunit; induces the transport of SLC51A from the endoplasmic reticulum to the plasma membrane.

The protein localises to the cell membrane. The enzyme catalyses taurocholate(out) = taurocholate(in). It carries out the reaction estrone 3-sulfate(out) = estrone 3-sulfate(in). It catalyses the reaction dehydroepiandrosterone 3-sulfate(out) = dehydroepiandrosterone 3-sulfate(in). The catalysed reaction is tauroursodeoxycholate(out) = tauroursodeoxycholate(in). The enzyme catalyses glycoursodeoxycholate(out) = glycoursodeoxycholate(in). It carries out the reaction glycocholate(out) = glycocholate(in). It catalyses the reaction taurochenodeoxycholate(out) = taurochenodeoxycholate(in). The catalysed reaction is glycochenodeoxycholate(out) = glycochenodeoxycholate(in). The enzyme catalyses taurodeoxycholate(out) = taurodeoxycholate(in). It carries out the reaction glycodeoxycholate(out) = glycodeoxycholate(in). It catalyses the reaction prostaglandin E2(out) = prostaglandin E2(in). Functionally, essential component of the Ost-alpha/Ost-beta complex, a heterodimer that acts as the intestinal basolateral transporter responsible for bile acid export from enterocytes into portal blood. The Ost-alpha/Ost-beta complex efficiently transports the major species of bile acids (taurocholate). Taurine conjugates are transported more efficiently across the basolateral membrane than glycine-conjugated bile acids. Can also transport steroids such as estrone 3-sulfate and dehydroepiandrosterone 3-sulfate, therefore playing a role in the enterohepatic circulation of sterols. Able to transport eicosanoids such as prostaglandin E2. Modulates SLC51A glycosylation, membrane trafficking and stability activities. The sequence is that of Organic solute transporter subunit beta (SLC51B) from Bos taurus (Bovine).